The sequence spans 340 residues: Peroxisomal coenzyme A diphosphatase 1, peroxisomal (340 aa).

A peroxisome-targeting transit peptide spans 1–7 (MILSQRR). The Nudix hydrolase domain occupies 37–199 (KRNSAVIILL…DEDVKSYQAE (163 aa)). A Nudix box motif is present at residues 77 to 99 (GKADYFQETFESVARREAEEEIG). 2 residues coordinate Mg(2+): glutamate 93 and glutamate 97.

It belongs to the Nudix hydrolase family. PCD1 subfamily. Mn(2+) serves as cofactor. Requires Mg(2+) as cofactor. Post-translationally, the size of the cleaved transit peptide can be of 7 or 8 residues.

The protein resides in the peroxisome. The catalysed reaction is CoA + H2O = (R)-4'-phosphopantetheine + adenosine 3',5'-bisphosphate + 2 H(+). It catalyses the reaction CoA-disulfide + H2O = 4'-phosphopantetheinyl-CoA disulfide + adenosine 3',5'-bisphosphate + 2 H(+). It carries out the reaction 8-oxo-dGTP + H2O = 8-oxo-dGMP + diphosphate + H(+). The enzyme catalyses 2-oxo-dATP + H2O = 2-oxo-dAMP + diphosphate + H(+). Its function is as follows. Diphosphatase (pyrophosphatase) with specificity for coenzyme A and CoA derivatives. Catalyzes the hydrolysis of the diphosphate linkage in CoA to give 3',5'-ADP and 4'-phosphopantetheine. Prefers oxidized CoA disulfide (CoASSCoA) over CoA as a substrate. May be required to remove potentially toxic oxidized CoA disulfide from peroxisomes to maintain the capacity for beta-oxidation of fatty acids. Can also hydrolyze 8-oxo-dGTP and 2-OH-dATP in vitro; therefore it may function as a sanitizing enzyme for oxidized nucleotides and may contribute to prevention of spontaneous mutagenesis due to the misincorporation of these oxidized nucleotides during DNA synthesis. Shows moderate activity in vitro with several short chain acyl-CoA esters and very low activity on 3'-dephospho-CoA while is not active with (deoxy)nucleoside 5'-triphosphates, nucleoside 5'-di- or monophosphates, diadenosine polyphosphates, nucleoside 5'-diphosphosugars, cytidine 5'-diphosphoalcohols, NAD(+), NADH, or FAD. The protein is Peroxisomal coenzyme A diphosphatase 1, peroxisomal (PCD1) of Saccharomyces cerevisiae (strain ATCC 204508 / S288c) (Baker's yeast).